Consider the following 389-residue polypeptide: Mannitol-1-phosphate 5-dehydrogenase (389 aa).

7-18 (AVHFGGGNIGRG) contributes to the NAD(+) binding site. Residue Lys216 is part of the active site.

The protein belongs to the mannitol dehydrogenase family. Monomer.

The catalysed reaction is D-mannitol 1-phosphate + NAD(+) = beta-D-fructose 6-phosphate + NADH + H(+). Functionally, catalyzes the NAD(H)-dependent interconversion of D-fructose 6-phosphate and D-mannitol 1-phosphate in the mannitol metabolic pathway. This chain is Mannitol-1-phosphate 5-dehydrogenase, found in Pyrenophora tritici-repentis (strain Pt-1C-BFP) (Wheat tan spot fungus).